Here is a 98-residue protein sequence, read N- to C-terminus: MSLLDYFKSSKSKTASVAKERLQILVAHERYYRNKPSYLPQLQEELMQVIRKYVQVDQDAISVKFEQDDNQETLELNITLPDTQNPRNTQQDMIRNAL.

It belongs to the MinE family.

In terms of biological role, prevents the cell division inhibition by proteins MinC and MinD at internal division sites while permitting inhibition at polar sites. This ensures cell division at the proper site by restricting the formation of a division septum at the midpoint of the long axis of the cell. The chain is Cell division topological specificity factor from Nitrosomonas eutropha (strain DSM 101675 / C91 / Nm57).